Consider the following 293-residue polypeptide: Small ribosomal subunit biogenesis GTPase RsgA (293 aa).

One can recognise a CP-type G domain in the interval 63-223 (KNWLVRPPIA…VADTPGFSAL (161 aa)). GTP-binding positions include 112 to 115 (NKMD) and 166 to 174 (GQSGVGKSS). Cys247, Cys252, His254, and Cys260 together coordinate Zn(2+).

This sequence belongs to the TRAFAC class YlqF/YawG GTPase family. RsgA subfamily. As to quaternary structure, monomer. Associates with 30S ribosomal subunit, binds 16S rRNA. The cofactor is Zn(2+).

The protein localises to the cytoplasm. Its function is as follows. One of several proteins that assist in the late maturation steps of the functional core of the 30S ribosomal subunit. Helps release RbfA from mature subunits. May play a role in the assembly of ribosomal proteins into the subunit. Circularly permuted GTPase that catalyzes slow GTP hydrolysis, GTPase activity is stimulated by the 30S ribosomal subunit. The chain is Small ribosomal subunit biogenesis GTPase RsgA from Geobacillus sp. (strain WCH70).